Here is a 251-residue protein sequence, read N- to C-terminus: Octanoyltransferase (251 aa).

One can recognise a BPL/LPL catalytic domain in the interval 56-241 (AETPDEIWIV…NLDGASAAAD (186 aa)). Substrate-binding positions include 96–103 (RGGQITYH), 168–170 (ALG), and 181–183 (GLS). Cys199 serves as the catalytic Acyl-thioester intermediate.

This sequence belongs to the LipB family.

It localises to the cytoplasm. The catalysed reaction is octanoyl-[ACP] + L-lysyl-[protein] = N(6)-octanoyl-L-lysyl-[protein] + holo-[ACP] + H(+). It functions in the pathway protein modification; protein lipoylation via endogenous pathway; protein N(6)-(lipoyl)lysine from octanoyl-[acyl-carrier-protein]: step 1/2. Its function is as follows. Catalyzes the transfer of endogenously produced octanoic acid from octanoyl-acyl-carrier-protein onto the lipoyl domains of lipoate-dependent enzymes. Lipoyl-ACP can also act as a substrate although octanoyl-ACP is likely to be the physiological substrate. The chain is Octanoyltransferase from Burkholderia vietnamiensis (strain G4 / LMG 22486) (Burkholderia cepacia (strain R1808)).